We begin with the raw amino-acid sequence, 313 residues long: NAD-capped RNA hydrolase NudC (313 aa).

Arg-111 provides a ligand contact to substrate. Residues 168-293 enclose the Nudix hydrolase domain; the sequence is PRIDPAVICL…DWSSASESKL (126 aa). A divalent metal cation contacts are provided by Ala-202, Glu-218, and Glu-222. Residues 203–224 carry the Nudix box motif; sequence GFVEAGESFEVCVAREIREEIG. A substrate-binding site is contributed by 236-243; the sequence is QPWPFPRS. Glu-264 is a binding site for a divalent metal cation.

Belongs to the Nudix hydrolase family. NudC subfamily. In terms of assembly, homodimer. Requires Mg(2+) as cofactor. It depends on Mn(2+) as a cofactor.

The catalysed reaction is a 5'-end NAD(+)-phospho-ribonucleoside in mRNA + H2O = a 5'-end phospho-adenosine-phospho-ribonucleoside in mRNA + beta-nicotinamide D-ribonucleotide + 2 H(+). It carries out the reaction NAD(+) + H2O = beta-nicotinamide D-ribonucleotide + AMP + 2 H(+). The enzyme catalyses NADH + H2O = reduced beta-nicotinamide D-ribonucleotide + AMP + 2 H(+). Functionally, mRNA decapping enzyme that specifically removes the nicotinamide adenine dinucleotide (NAD) cap from a subset of mRNAs by hydrolyzing the diphosphate linkage to produce nicotinamide mononucleotide (NMN) and 5' monophosphate mRNA. The NAD-cap is present at the 5'-end of some mRNAs and stabilizes RNA against 5'-processing. Has preference for mRNAs with a 5'-end purine. Catalyzes the hydrolysis of a broad range of dinucleotide pyrophosphates. The chain is NAD-capped RNA hydrolase NudC from Mycobacterium bovis (strain ATCC BAA-935 / AF2122/97).